Reading from the N-terminus, the 176-residue chain is Shikimate kinase (176 aa).

Position 10-15 (T10–S15) interacts with ATP. S14 serves as a coordination point for Mg(2+). Substrate-binding residues include D32, G81, and R138.

This sequence belongs to the shikimate kinase family. Monomer. Requires Mg(2+) as cofactor.

The protein localises to the cytoplasm. It catalyses the reaction shikimate + ATP = 3-phosphoshikimate + ADP + H(+). The protein operates within metabolic intermediate biosynthesis; chorismate biosynthesis; chorismate from D-erythrose 4-phosphate and phosphoenolpyruvate: step 5/7. Catalyzes the specific phosphorylation of the 3-hydroxyl group of shikimic acid using ATP as a cosubstrate. The chain is Shikimate kinase from Chlamydia pneumoniae (Chlamydophila pneumoniae).